The sequence spans 319 residues: ATP-dependent 6-phosphofructokinase (319 aa).

Residue Gly11 participates in ATP binding. 21-25 (RAVVR) serves as a coordination point for ADP. ATP-binding positions include 72–73 (RC) and 102–105 (GEGS). Glu103 serves as a coordination point for Mg(2+). 126–128 (TID) contributes to the substrate binding site. Asp128 functions as the Proton acceptor in the catalytic mechanism. Residue Lys155 participates in ADP binding. Substrate is bound by residues Arg163 and 170–172 (MGR). ADP is bound by residues 186–188 (GAE), Arg212, and 214–216 (KIN). Substrate-binding positions include Glu223, Arg244, and 250-253 (HVQR).

The protein belongs to the phosphofructokinase type A (PFKA) family. ATP-dependent PFK group I subfamily. Prokaryotic clade 'B1' sub-subfamily. Homotetramer. Requires Mg(2+) as cofactor.

The protein resides in the cytoplasm. It catalyses the reaction beta-D-fructose 6-phosphate + ATP = beta-D-fructose 1,6-bisphosphate + ADP + H(+). It functions in the pathway carbohydrate degradation; glycolysis; D-glyceraldehyde 3-phosphate and glycerone phosphate from D-glucose: step 3/4. Its activity is regulated as follows. Allosterically activated by ADP and other diphosphonucleosides, and allosterically inhibited by phosphoenolpyruvate. Catalyzes the phosphorylation of D-fructose 6-phosphate to fructose 1,6-bisphosphate by ATP, the first committing step of glycolysis. In Thermotoga petrophila (strain ATCC BAA-488 / DSM 13995 / JCM 10881 / RKU-1), this protein is ATP-dependent 6-phosphofructokinase.